Here is a 502-residue protein sequence, read N- to C-terminus: UPF0371 protein CLM_0396 (502 aa).

It belongs to the UPF0371 family.

The sequence is that of UPF0371 protein CLM_0396 from Clostridium botulinum (strain Kyoto / Type A2).